We begin with the raw amino-acid sequence, 568 residues long: AP2-like ethylene-responsive transcription factor PLT2 (568 aa).

Positions 151 to 171 (ASPAETSADNSSSTTNTSGGA) are enriched in low complexity. Residues 151 to 173 (ASPAETSADNSSSTTNTSGGAIV) are disordered. 2 consecutive DNA-binding regions (AP2/ERF) follow at residues 190–256 (IYRG…TNFP) and 292–350 (MYRG…TNFE). Residues 548-568 (WNSGESAQGSNPGGVFTMWNE) are disordered.

This sequence belongs to the AP2/ERF transcription factor family. AP2 subfamily. In terms of processing, stabilized in root meristems by reactive oxygen species (ROS) mediated oxidative post-translational modification triggered by RGF1 hormone peptide in a RITF1-dependent manner. As to expression, expressed in roots, seedlings, flowers, and siliques. Also detected at low levels in leaves. In roots, specifically detected in the distal root meristem, including the QC. This tissue specificity is regulated by auxin gradient and depends on PIN proteins.

Its subcellular location is the nucleus. In terms of biological role, probably acts as a transcriptional activator. Binds to the GCC-box pathogenesis-related promoter element. May be involved in the regulation of gene expression by stress factors and by components of stress signal transduction pathways. Master regulator of basal/root fate. Essential for root quiescent center (QC) and columella specification, stem cell activity, as well as for establishment of the stem cell niche during embryogenesis. Modulates the root polar auxin transport by regulating the distribution of PIN genes. Essential role in respecifying pattern and polarity in damaged roots. Direct target of the transcriptional corepressor TPL. Expression levels and patterns regulated post-transcriptionally by root meristem growth factors (RGFs). The protein is AP2-like ethylene-responsive transcription factor PLT2 of Arabidopsis thaliana (Mouse-ear cress).